The following is an 83-amino-acid chain: Small ribosomal subunit protein bS20 (83 aa).

Belongs to the bacterial ribosomal protein bS20 family.

Its function is as follows. Binds directly to 16S ribosomal RNA. This is Small ribosomal subunit protein bS20 from Amoebophilus asiaticus (strain 5a2).